A 150-amino-acid chain; its full sequence is Large ribosomal subunit protein bL9 (150 aa).

The protein belongs to the bacterial ribosomal protein bL9 family.

Functionally, binds to the 23S rRNA. The protein is Large ribosomal subunit protein bL9 of Photorhabdus laumondii subsp. laumondii (strain DSM 15139 / CIP 105565 / TT01) (Photorhabdus luminescens subsp. laumondii).